The following is a 184-amino-acid chain: Putative DNA-directed RNA polymerase subunit 454R (184 aa).

This sequence belongs to the archaeal Rpo5/eukaryotic RPB5 RNA polymerase subunit family.

Component of the DNA-dependent RNA polymerase that catalyzes the transcription in the cytoplasm of viral DNA into RNA using the four ribonucleoside triphosphates as substrates. This Invertebrate iridescent virus 6 (IIV-6) protein is Putative DNA-directed RNA polymerase subunit 454R.